The following is a 360-amino-acid chain: Protein Wnt-2 (360 aa).

An N-terminal signal peptide occupies residues M1–S25. 11 cysteine pairs are disulfide-bonded: C76-C87, C127-C135, C137-C157, C206-C220, C208-C215, C278-C309, C294-C304, C308-C348, C324-C339, C326-C336, and C331-C332. Residue S212 is the site of O-palmitoleoyl serine; by PORCN attachment. N-linked (GlcNAc...) asparagine glycosylation is present at N295.

It belongs to the Wnt family. In terms of processing, palmitoleoylation is required for efficient binding to frizzled receptors. Depalmitoleoylation leads to Wnt signaling pathway inhibition.

The protein localises to the secreted. It localises to the extracellular space. The protein resides in the extracellular matrix. Its function is as follows. Ligand for members of the frizzled family of seven transmembrane receptors. Functions in the canonical Wnt signaling pathway that results in activation of transcription factors of the TCF/LEF family. Functions as a upstream regulator of FGF10 expression. Plays an important role in embryonic lung development. May contribute to embryonic brain development by regulating the proliferation of dopaminergic precursors and neurons. This is Protein Wnt-2 (WNT2) from Nomascus leucogenys (Northern white-cheeked gibbon).